The following is a 216-amino-acid chain: HTH-type transcriptional regulator EthR (216 aa).

The segment covering 1 to 10 has biased composition (polar residues); it reads MTTSAASQAS. A disordered region spans residues 1 to 24; it reads MTTSAASQASLPRGRRTARPSGDD. Residues 23–83 enclose the HTH tetR-type domain; that stretch reads DDRELAILAT…TLLDRVVNQA (61 aa). The H-T-H motif DNA-binding region spans 46-65; that stretch reads SVDDLAKGAGISRPTFYFYF.

As to quaternary structure, homodimer.

In terms of biological role, involved in the repression of the monooxygenase EthA which is responsible of the formation of the active metabolite of ethionamide (ETH). This Mycobacterium bovis (strain ATCC BAA-935 / AF2122/97) protein is HTH-type transcriptional regulator EthR (ethR).